Here is a 946-residue protein sequence, read N- to C-terminus: Structure-specific endonuclease subunit SLX4 (946 aa).

A compositionally biased stretch (pro residues) spans 1–14 (MPASPLPALSPPAS). Disordered regions lie at residues 1–35 (MPAS…IPPD), 54–119 (QHFD…EEAV), 147–318 (PSDE…GGFT), 339–399 (ADSA…AAQL), 416–471 (TKVP…PKHI), 577–748 (FPLL…GSGR), and 765–799 (ALSP…KADS). Positions 54 to 74 (QHFDDDIAGKDQEQSRKKSPE) are enriched in basic and acidic residues. 2 stretches are compositionally biased toward basic residues: residues 160–169 (KAGKPRKPRA) and 182–195 (KPKR…KAAK). Residues 278-287 (AVSRRRDWTP) are compositionally biased toward basic and acidic residues. Positions 453-469 (SKARSKKASTKAAAKPK) are enriched in basic residues. Residues 627-636 (KANDEPDHVM) show a composition bias toward basic and acidic residues. Positions 707–717 (KSQSAIATSGS) are enriched in polar residues. Residues 722-733 (KEPKRTKGKEVK) are compositionally biased toward basic and acidic residues.

It belongs to the SLX4 family. Forms a heterodimer with SLX1. In terms of processing, phosphorylated in response to DNA damage.

It is found in the nucleus. Regulatory subunit of the SLX1-SLX4 structure-specific endonuclease that resolves DNA secondary structures generated during DNA repair and recombination. Has endonuclease activity towards branched DNA substrates, introducing single-strand cuts in duplex DNA close to junctions with ss-DNA. The polypeptide is Structure-specific endonuclease subunit SLX4 (Phaeosphaeria nodorum (strain SN15 / ATCC MYA-4574 / FGSC 10173) (Glume blotch fungus)).